The chain runs to 529 residues: Peptide chain release factor 3 (529 aa).

The tr-type G domain occupies 11-280 (AARRTFAIIS…GLVAWAPPPM (270 aa)). Residues 20–27 (SHPDAGKT), 88–92 (DTPGH), and 142–145 (NKVD) contribute to the GTP site.

Belongs to the TRAFAC class translation factor GTPase superfamily. Classic translation factor GTPase family. PrfC subfamily.

The protein resides in the cytoplasm. Functionally, increases the formation of ribosomal termination complexes and stimulates activities of RF-1 and RF-2. It binds guanine nucleotides and has strong preference for UGA stop codons. It may interact directly with the ribosome. The stimulation of RF-1 and RF-2 is significantly reduced by GTP and GDP, but not by GMP. This Sodalis glossinidius (strain morsitans) protein is Peptide chain release factor 3.